A 162-amino-acid polypeptide reads, in one-letter code: Regulatory protein RecX (162 aa).

This sequence belongs to the RecX family.

The protein localises to the cytoplasm. In terms of biological role, modulates RecA activity. The protein is Regulatory protein RecX of Xanthomonas campestris pv. campestris (strain 8004).